Consider the following 628-residue polypeptide: Leucine-rich repeat and fibronectin type-III domain-containing protein 3 (628 aa).

The N-terminal stretch at 1-16 (MAVLPLLLCLLPLAPA) is a signal peptide. Over 17-540 (SSPSQPATPS…APHAPFLGGT (524 aa)) the chain is Extracellular. Positions 19 to 59 (PSQPATPSPCPRRCRCQTQSLPLSVLCPGAGLLFVPPSLDR) constitute an LRRNT domain. LRR repeat units lie at residues 84–105 (GLLH…AFAD), 108–129 (ALRA…QLRG), 132–153 (NLRH…ALDD), 157–178 (TLED…ALGR), 181–202 (NVNT…AFSR), and 205–226 (KLAR…PLFS). The LRRCT domain maps to 249–295 (NPLHCNCELVWLRRLAREDDLEACASPPALGGRYFWAVGEEEFVCEP). The region spanning 295-382 (PPVVTHRSPP…GEATAAVELT (88 aa)) is the Ig-like domain. A disulfide bridge links C317 with C366. 2 N-linked (GlcNAc...) asparagine glycosylation sites follow: N348 and N393. The tract at residues 380–432 (ELTVGPPPPPQLANSTSCDPPRDGDPDALTPPSAASASAAAKAADTGPPTDRG) is disordered. The span at 406–429 (DALTPPSAASASAAAKAADTGPPT) shows a compositional bias: low complexity. The 99-residue stretch at 427-525 (PPTDRGVQVT…GCARFSTEPA (99 aa)) folds into the Fibronectin type-III domain. The chain crosses the membrane as a helical span at residues 541–561 (MIIALGGVIVASVLVFIFVLL). The Cytoplasmic portion of the chain corresponds to 562 to 628 (MRYKVHGGQP…WRPSHEPTGP (67 aa)). A disordered region spans residues 587–628 (QTNGSLGPTPAPPAPEPAAPRAHTVVQLDCEPWRPSHEPTGP). The segment covering 595 to 604 (TPAPPAPEPA) has biased composition (pro residues). Residues 617–628 (EPWRPSHEPTGP) are compositionally biased toward basic and acidic residues.

It belongs to the LRFN family. In terms of assembly, can form heteromeric complexes with LRFN1, LRFN2, LRFN4 and LRFN5. Able to form homomeric complexes across cell junctions, between adjacent cells. Does not interact with DLG4. N-glycosylated.

The protein resides in the cell membrane. It is found in the cell projection. Its subcellular location is the axon. The protein localises to the dendrite. It localises to the synapse. The protein resides in the presynaptic cell membrane. It is found in the postsynaptic cell membrane. In terms of biological role, cell adhesion molecule that mediates homophilic cell-cell adhesion in a Ca(2+)-independent manner. Promotes neurite outgrowth in hippocampal neurons. The chain is Leucine-rich repeat and fibronectin type-III domain-containing protein 3 (LRFN3) from Ailuropoda melanoleuca (Giant panda).